The following is a 54-amino-acid chain: MLQYALVFFVIALIAAVFGFGGIAAGAVEIAKILFFIFLIVALVTAVMGLVRRR.

2 helical membrane passes run 5-25 (ALVF…GIAA) and 30-50 (IAKI…VMGL).

Belongs to the UPF0391 family.

The protein resides in the cell membrane. This is UPF0391 membrane protein Reut_A0124 from Cupriavidus pinatubonensis (strain JMP 134 / LMG 1197) (Cupriavidus necator (strain JMP 134)).